The primary structure comprises 930 residues: Beta-mannosidase A (930 aa).

The first 21 residues, M1 to G21, serve as a signal peptide directing secretion. N-linked (GlcNAc...) asparagine glycans are attached at residues N62, N246, N281, N315, and N346. E478 functions as the Proton donor in the catalytic mechanism. N536, N607, N630, N657, N737, N760, N782, N789, N797, N823, and N909 each carry an N-linked (GlcNAc...) asparagine glycan.

Belongs to the glycosyl hydrolase 2 family. Beta-mannosidase A subfamily. In terms of assembly, homodimer.

The protein localises to the secreted. The enzyme catalyses Hydrolysis of terminal, non-reducing beta-D-mannose residues in beta-D-mannosides.. It participates in glycan metabolism; N-glycan degradation. Functionally, exoglycosidase that cleaves the single beta-linked mannose residue from the non-reducing end of beta-mannosidic oligosaccharides of various complexity and length. Involved in the degradation of polymeric mannan and galactomannan. The polypeptide is Beta-mannosidase A (mndA) (Neosartorya fischeri (strain ATCC 1020 / DSM 3700 / CBS 544.65 / FGSC A1164 / JCM 1740 / NRRL 181 / WB 181) (Aspergillus fischerianus)).